Reading from the N-terminus, the 259-residue chain is Binding partner of ACD11 1 (259 aa).

The 72-residue stretch at 6–77 (RSVKVGNLSS…QSVIIELAPN (72 aa)) folds into the RRM domain. Residues 219–259 (GEVGQKTKEKVEAEQPSQPAQSQQQLPEGYSPIHSSEYSKN) form a disordered region. Positions 232 to 243 (EQPSQPAQSQQQ) are enriched in low complexity.

Interacts with ACD11, PR1F2 and PR1F3.

Its subcellular location is the cytoplasm. The protein localises to the membrane. The protein is Binding partner of ACD11 1 (BPA1) of Arabidopsis thaliana (Mouse-ear cress).